Consider the following 686-residue polypeptide: Homoaconitase, mitochondrial (686 aa).

The N-terminal 17 residues, 1–17, are a transit peptide targeting the mitochondrion; it reads MRVVRCVRRFSASRAVS. Positions 337, 401, and 404 each coordinate [4Fe-4S] cluster.

The protein belongs to the aconitase/IPM isomerase family. [4Fe-4S] cluster is required as a cofactor.

The protein localises to the mitochondrion. The catalysed reaction is (2R,3S)-homoisocitrate = cis-homoaconitate + H2O. It functions in the pathway amino-acid biosynthesis; L-lysine biosynthesis via AAA pathway; L-alpha-aminoadipate from 2-oxoglutarate: step 3/5. Its function is as follows. Catalyzes the reversible hydration of cis-homoaconitate to (2R,3S)-homoisocitrate, a step in the alpha-aminoadipate pathway for lysine biosynthesis. This chain is Homoaconitase, mitochondrial (LYS4), found in Eremothecium gossypii (strain ATCC 10895 / CBS 109.51 / FGSC 9923 / NRRL Y-1056) (Yeast).